We begin with the raw amino-acid sequence, 364 residues long: D-alanine--D-alanine ligase A (364 aa).

Residues 145 to 348 form the ATP-grasp domain; the sequence is KRLLRDAGLN…YTDLITRLIE (204 aa). 175 to 230 contributes to the ATP binding site; sequence ESKLGLPLFVKPANQGSSVGVSKVTSEEQYTIAVDLAFEFDHKVIVEQGIKGREIE. Aspartate 302, glutamate 315, and asparagine 317 together coordinate Mg(2+).

The protein belongs to the D-alanine--D-alanine ligase family. The cofactor is Mg(2+). Mn(2+) is required as a cofactor.

The protein localises to the cytoplasm. It carries out the reaction 2 D-alanine + ATP = D-alanyl-D-alanine + ADP + phosphate + H(+). Its pathway is cell wall biogenesis; peptidoglycan biosynthesis. Functionally, cell wall formation. The sequence is that of D-alanine--D-alanine ligase A from Escherichia coli O6:H1 (strain CFT073 / ATCC 700928 / UPEC).